An 884-amino-acid polypeptide reads, in one-letter code: Androgen receptor (884 aa).

The tract at residues 1–522 (MEVQLGLGRV…PIDYYFPPQK (522 aa)) is modulating. The interaction with ZNF318 stretch occupies residues 1–551 (MEVQLGLGRV…GSCKVFFKRA (551 aa)). Disordered regions lie at residues 33–145 (VIQN…TLSL) and 174–207 (QQQQ…YLGG). Low complexity-rich tracts occupy residues 55–79 (QQQQ…PQAQ) and 174–196 (QQQQ…AAGA). The residue at position 61 (Ser-61) is a Phosphoserine; by CDK9. Phosphoserine is present on Ser-75. Residues 197 to 207 (PTSSKDSYLGG) are compositionally biased toward polar residues. Tyr-204 is modified (phosphotyrosine; by CSK). Residue Ser-237 is modified to Phosphoserine. Tyr-248 carries the post-translational modification Phosphotyrosine; by CSK and TNK2. The disordered stretch occupies residues 275–294 (DDSADKGTEEPAEYTPFKGS). Phosphotyrosine; by CSK is present on residues Tyr-288, Tyr-327, Tyr-338, and Tyr-343. At Tyr-344 the chain carries Phosphotyrosine; by CSK and TNK2. A Glycyl lysine isopeptide (Lys-Gly) (interchain with G-Cter in SUMO) cross-link involves residue Lys-367. Phosphotyrosine; by CSK is present on Tyr-374. Residue Lys-485 forms a Glycyl lysine isopeptide (Lys-Gly) (interchain with G-Cter in SUMO) linkage. Phosphotyrosine; by CSK occurs at positions 499 and 516. The segment at 516–883 (YYFPPQKTCL…GKVKPIYFHT (368 aa)) is interaction with LPXN. The segment at residues 523-596 (TCLICGDEAS…AGMTLGARKL (74 aa)) is a DNA-binding region (nuclear receptor). NR C4-type zinc fingers lie at residues 524-544 (CLIC…CGSC) and 560-584 (CASR…LRKC). An interaction with HIPK3 region spans residues 536–626 (YGALTCGSCK…TEESSQKLTV (91 aa)). Residues 556–883 (QKYLCASRND…GKVKPIYFHT (328 aa)) are interaction with CCAR1. An interaction with KAT7 region spans residues 589 to 883 (MTLGARKLKK…GKVKPIYFHT (295 aa)). Ser-615 carries the phosphoserine; by STK4/MST1 modification. Residues 633–864 (ECQPIFLNVL…DFPEMMAEII (232 aa)) enclose the NR LBD domain. 17beta-hydroxy-5alpha-androstan-3-one-binding residues include Asn-670 and Arg-717. Residues Lys-810 and Lys-812 each participate in a glycyl lysine isopeptide (Lys-Gly) (interchain with G-Cter in ubiquitin) cross-link. Thr-842 contacts 17beta-hydroxy-5alpha-androstan-3-one. Tyr-880 bears the Phosphotyrosine; by CSK mark.

This sequence belongs to the nuclear hormone receptor family. NR3 subfamily. In terms of assembly, binds DNA as a homodimer. Part of a ternary complex containing AR, EFCAB6/DJBP and PARK7. Interacts with HIPK3 and NR0B2 in the presence of androgen. The ligand binding domain interacts with KAT7/HBO1 in the presence of dihydrotestosterone. Interacts with EFCAB6/DJBP, PQBP1, RANBP9, RBAK, SPDEF, SRA1, TGFB1I1 and RREB1. Interacts with ZMIZ1/ZIMP10 and ZMIZ2/ZMIP7 which both enhance its transactivation activity. Interacts with SLC30A9 and RAD54L2/ARIP4. Interacts with MACROD1 (via macro domain). Interacts via the ligand-binding domain with LXXLL and FXXLF motifs from NCOA1, NCOA2, NCOA3 and MAGEA11. Interacts (via nuclear receptor DNA binding domain and nuclear receptor ligand binding domain) with NCOA4. The AR N-terminal poly-Gln region binds Ran resulting in enhancement of AR-mediated transactivation. Ran-binding decreases as the poly-Gln length increases. Interacts with HIP1 (via coiled coil domain). Interacts (via ligand-binding domain) with TRIM68. Interacts with TNK2. Interacts with USP26. Interacts with RNF6. Interacts (regulated by RNF6 probably through polyubiquitination) with RNF14; regulates AR transcriptional activity. Interacts with PRMT2 and TRIM24. Interacts with RACK1. Interacts with RANBP10; this interaction enhances dihydrotestosterone-induced AR transcriptional activity. Interacts with PRPF6 in a hormone-independent way; this interaction enhances dihydrotestosterone-induced AR transcriptional activity. Interacts with STK4/MST1. Interacts with ZIPK/DAPK3. Interacts with LPXN. Interacts with MAK. Part of a complex containing AR, MAK and NCOA3. Interacts with CRY1. Interacts with CCAR1 and GATA2. Interacts with ZNF318. Interacts with BUD31. Interacts with ARID4A. Interacts with ARID4B. Interacts (via NR LBD domain) with ZBTB7A; the interaction is direct and androgen-dependent. Interacts with NCOR1. Interacts with NCOR2. Interacts with CRY2 in a ligand-dependent manner. Post-translationally, phosphorylated in prostate cancer cells in response to several growth factors including EGF. Phosphorylation is induced by c-Src kinase (CSK). Tyr-499 is one of the major phosphorylation sites and an increase in phosphorylation and Src kinase activity is associated with prostate cancer progression. Phosphorylation by TNK2 enhances the DNA-binding and transcriptional activity. Phosphorylation at Ser-61 by CDK9 regulates AR promoter selectivity and cell growth. Sumoylated on Lys-367 (major) and Lys-485. Ubiquitinated. Deubiquitinated by USP26. 'Lys-6' and 'Lys-27'-linked polyubiquitination by RNF6 modulates AR transcriptional activity and specificity. In terms of processing, palmitoylated by ZDHHC7 and ZDHHC21. Palmitoylation is required for plasma membrane targeting and for rapid intracellular signaling via ERK and AKT kinases and cAMP generation.

The protein resides in the nucleus. The protein localises to the cytoplasm. In terms of biological role, steroid hormone receptors are ligand-activated transcription factors that regulate eukaryotic gene expression and affect cellular proliferation and differentiation in target tissues. Transcription factor activity is modulated by bound coactivator and corepressor proteins like ZBTB7A that recruits NCOR1 and NCOR2 to the androgen response elements/ARE on target genes, negatively regulating androgen receptor signaling and androgen-induced cell proliferation. Transcription activation is also down-regulated by NR0B2. Activated, but not phosphorylated, by HIPK3 and ZIPK/DAPK3. This is Androgen receptor (AR) from Eulemur fulvus collaris (Collared brown lemur).